A 262-amino-acid chain; its full sequence is Acyl-[acyl-carrier-protein]--UDP-N-acetylglucosamine O-acyltransferase (262 aa).

The protein belongs to the transferase hexapeptide repeat family. LpxA subfamily. Homotrimer.

Its subcellular location is the cytoplasm. The catalysed reaction is a (3R)-hydroxyacyl-[ACP] + UDP-N-acetyl-alpha-D-glucosamine = a UDP-3-O-[(3R)-3-hydroxyacyl]-N-acetyl-alpha-D-glucosamine + holo-[ACP]. Its pathway is glycolipid biosynthesis; lipid IV(A) biosynthesis; lipid IV(A) from (3R)-3-hydroxytetradecanoyl-[acyl-carrier-protein] and UDP-N-acetyl-alpha-D-glucosamine: step 1/6. Its function is as follows. Involved in the biosynthesis of lipid A, a phosphorylated glycolipid that anchors the lipopolysaccharide to the outer membrane of the cell. This is Acyl-[acyl-carrier-protein]--UDP-N-acetylglucosamine O-acyltransferase from Escherichia coli O157:H7.